Consider the following 295-residue polypeptide: MVHINELPENILLELFIHIPAPQLLRNCRLVCRLWRDLIDVVSLWKRKSLREGFFTKDRCEPVEDWKVFYILCSLQRNLLRNPCAEENLSSWRIDSNGGDRWKVETLPGSCGTSFPDNKVKKYFVTSFEMCLKSQMVDLKAEGYCEELMDTFRPDIVVKDWVAPRADCGCTYQLRVQLASADYIVLASFEPPPVTFQQWNDAKWQEISHTFSDYPPGVRHILFQHGGQDTQFWKGWYGPRVTNSSIIISHRTAKNPPPARTLPEETVVIGRRRRASDSNTHEGFFWQGLWQRLRR.

The F-box domain maps to 1–48 (MVHINELPENILLELFIHIPAPQLLRNCRLVCRLWRDLIDVVSLWKRK). One can recognise an FBA domain in the interval 69 to 250 (FYILCSLQRN…VTNSSIIISH (182 aa)). Ser-249 and Ser-276 each carry phosphoserine. Thr-280 bears the Phosphothreonine mark.

Interacts with CHEK1 and CUL1. Part of a SCF (SKP1-cullin-F-box) protein ligase complex. Interacts with VCP. In terms of tissue distribution, present in liver and kidney (at protein level). Widely expressed.

Its subcellular location is the cytoplasm. Its pathway is protein modification; protein ubiquitination. In terms of biological role, substrate-recognition component of some SCF (SKP1-CUL1-F-box protein)-type E3 ubiquitin ligase complexes. Involved in DNA damage response by specifically recognizing activated CHEK1 (phosphorylated on 'Ser-345'), promoting its ubiquitination and degradation. Ubiquitination of CHEK1 is required to ensure that activated CHEK1 does not accumulate as cells progress through S phase, or when replication forks encounter transient impediments during normal DNA replication. Involved in endoplasmic reticulum-associated degradation pathway (ERAD) for misfolded lumenal proteins by recognizing and binding sugar chains on unfolded glycoproteins that are retrotranslocated into the cytosol and promoting their ubiquitination and subsequent degradation. Able to recognize and bind denatured glycoproteins, which are modified with not only high-mannose but also complex-type oligosaccharides. Also recognizes sulfated glycans. The protein is F-box only protein 6 (Fbxo6) of Mus musculus (Mouse).